We begin with the raw amino-acid sequence, 589 residues long: Protein FAM161B (589 aa).

Disordered regions lie at residues Met-1 to Trp-166, Lys-265 to Pro-297, and Ala-386 to Ser-444. Residues Pro-92–Glu-106 are compositionally biased toward acidic residues. The span at Thr-151 to Trp-166 shows a compositional bias: polar residues. Over residues Lys-265–Gln-275 the composition is skewed to basic and acidic residues. The segment covering Ser-287–Pro-297 has biased composition (basic residues). The segment covering Ala-386–Arg-396 has biased composition (basic and acidic residues). A coiled-coil region spans residues Glu-510–Glu-577.

It belongs to the FAM161 family. Interacts with FAM161A.

In Mus musculus (Mouse), this protein is Protein FAM161B (Fam161b).